We begin with the raw amino-acid sequence, 101 residues long: Signal recognition particle 19 kDa protein (101 aa).

The protein belongs to the SRP19 family. As to quaternary structure, part of the signal recognition particle protein translocation system, which is composed of SRP and FtsY. Archaeal SRP consists of a 7S RNA molecule of 300 nucleotides and two protein subunits: SRP54 and SRP19.

It is found in the cytoplasm. Its function is as follows. Involved in targeting and insertion of nascent membrane proteins into the cytoplasmic membrane. Binds directly to 7S RNA and mediates binding of the 54 kDa subunit of the SRP. The protein is Signal recognition particle 19 kDa protein of Thermofilum pendens (strain DSM 2475 / Hrk 5).